The chain runs to 97 residues: Putative ankyrin repeat protein RBE_0357 (97 aa).

Residues 24 to 54 (YGKTALHYAYTKRNIDIIKILLKCPGIKICI) form an ANK repeat.

This chain is Putative ankyrin repeat protein RBE_0357, found in Rickettsia bellii (strain RML369-C).